The chain runs to 507 residues: MVTIRADEISNIIRERIEQYNREVKIVNTGTVLQVGDGIARIHGLDEVMAGELVEFEEGTIGIALNLESNNVGVVLMGDGLLIQEGSSVKATGRIAQIPVSEAYLGRVVNALAKPIDGRGEISASEFRLIESAAPGIISRRSVYEPLQTGLIAIDSMIPIGRGQRELIIGDRQTGKTAVATDTILNQQGQNVICVYVAIGQKASSVAQVVTTLQERGAMEYTIVVAETADSPATLQYLAPYTGAALAEYFMYRERHTLIIYDDLSKQAQAYRQMSLLLRRPPGREAYPGDVFYLHSRLLERAAKLSSSLGEGSMTALPIVETQSGDVSAYIPTNVISITDGQIFLSADLFNSGIRPAINVGISVSRVGSAAQIKAMKQVAGKLKLELAQFAELEAFAQFASDLDKATQNQLARGQRLRELLKQSQSAPLTVEEQIMTIYTGTNGYLDSLEVGQVRKFLVELRTYLKTTKPQFQEIISSTKTFTEEAEALLKEAIQEQMDRFILQEQA.

170 to 177 provides a ligand contact to ATP; that stretch reads GDRQTGKT.

It belongs to the ATPase alpha/beta chains family. As to quaternary structure, F-type ATPases have 2 components, CF(1) - the catalytic core - and CF(0) - the membrane proton channel. CF(1) has five subunits: alpha(3), beta(3), gamma(1), delta(1), epsilon(1). CF(0) has four main subunits: a, b, b' and c.

It is found in the plastid. It localises to the chloroplast thylakoid membrane. The enzyme catalyses ATP + H2O + 4 H(+)(in) = ADP + phosphate + 5 H(+)(out). Produces ATP from ADP in the presence of a proton gradient across the membrane. The alpha chain is a regulatory subunit. The protein is ATP synthase subunit alpha, chloroplastic of Solanum bulbocastanum (Wild potato).